Consider the following 189-residue polypeptide: Chitin synthase 1 (189 aa).

Belongs to the chitin synthase family. Class I subfamily.

The protein resides in the cell membrane. The enzyme catalyses [(1-&gt;4)-N-acetyl-beta-D-glucosaminyl](n) + UDP-N-acetyl-alpha-D-glucosamine = [(1-&gt;4)-N-acetyl-beta-D-glucosaminyl](n+1) + UDP + H(+). Polymerizes chitin, a structural polymer of the cell wall and septum, by transferring the sugar moiety of UDP-GlcNAc to the non-reducing end of the growing chitin polymer. In Botryotinia fuckeliana (Noble rot fungus), this protein is Chitin synthase 1 (chs1).